The chain runs to 145 residues: Functional amyloid chaperone FapA (145 aa).

A signal peptide spans 1 to 27; it reads MRKRDKRLYHLLLVGCVLGSLSLTAQA.

The protein belongs to the FapA family. Monomer in solution. Interacts with FapC but not FapB in vitro.

The protein resides in the periplasm. An intrinsically disordered chaperone for fibril amyloid FapC that guards against fibrillation, pro within the periplasm. Upon overexpression of the endogenous six-gene locus (fapA-fapF), cells form large clumps during liquid growth, make large amounts of biofilm and produce relatively unstable amyloid fibrils. The chain is Functional amyloid chaperone FapA from Pseudomonas putida (strain ATCC 700007 / DSM 6899 / JCM 31910 / BCRC 17059 / LMG 24140 / F1).